Consider the following 479-residue polypeptide: Mitochondria-eating protein (479 aa).

2 coiled-coil regions span residues 109 to 161 (ERKL…LATT) and 187 to 223 (LRRLDHLNDCEQQIERLRDELSILDAQKSVLQSRIAR). Disordered regions lie at residues 220–251 (RIARSRSPSPRRIRSRSPSPLPLRSCSPGRAR) and 456–479 (RSRSRSQNRSRSVSPLLSHLSRSR). The span at 235-249 (RSPSPLPLRSCSPGR) shows a compositional bias: low complexity.

Belongs to the MIEAP family.

It is found in the cytoplasm. The protein localises to the cytosol. It localises to the mitochondrion outer membrane. Its subcellular location is the mitochondrion matrix. Functionally, key regulator of mitochondrial quality that mediates the repairing or degradation of unhealthy mitochondria in response to mitochondrial damage. Mediator of mitochondrial protein catabolic process (also named MALM) by mediating the degradation of damaged proteins inside mitochondria by promoting the accumulation in the mitochondrial matrix of hydrolases that are characteristic of the lysosomal lumen. Also involved in mitochondrion degradation of damaged mitochondria by promoting the formation of vacuole-like structures (named MIV), which engulf and degrade unhealthy mitochondria by accumulating lysosomes. Binds cardiolipin. May form molecular condensates (non-membrane-bounded organelles) within mitochondria that compartmentalize and promote cardiolipin metabolism. The chain is Mitochondria-eating protein (SPATA18) from Gallus gallus (Chicken).